The chain runs to 112 residues: METLLGVSLVILWLQLARVNSQQGEEDPQALSIQEGENATMNCSYKTSINNLQWYRQNSGRGLVHLILIRSNEREKHSGRLRVTLDTSKKSSSLLITASRAADTASYFCATD.

Positions Met-1–Ser-21 are cleaved as a signal peptide. Residues Gln-22–Asp-112 form the Ig-like domain. N-linked (GlcNAc...) asparagine glycans are attached at residues Asn-38 and Asn-42. A disulfide bond links Cys-43 and Cys-109.

Alpha-beta TR is a heterodimer composed of an alpha and beta chain; disulfide-linked. The alpha-beta TR is associated with the transmembrane signaling CD3 coreceptor proteins to form the TR-CD3 (TcR or TCR). The assembly of alpha-beta TR heterodimers with CD3 occurs in the endoplasmic reticulum where a single alpha-beta TR heterodimer associates with one CD3D-CD3E heterodimer, one CD3G-CD3E heterodimer and one CD247 homodimer forming a stable octameric structure. CD3D-CD3E and CD3G-CD3E heterodimers preferentially associate with TR alpha and TR beta chains, respectively. The association of the CD247 homodimer is the last step of TcR assembly in the endoplasmic reticulum and is required for transport to the cell surface.

The protein localises to the cell membrane. In terms of biological role, v region of the variable domain of T cell receptor (TR) alpha chain that participates in the antigen recognition. Alpha-beta T cell receptors are antigen specific receptors which are essential to the immune response and are present on the cell surface of T lymphocytes. Recognize peptide-major histocompatibility (MH) (pMH) complexes that are displayed by antigen presenting cells (APC), a prerequisite for efficient T cell adaptive immunity against pathogens. Binding of alpha-beta TR to pMH complex initiates TR-CD3 clustering on the cell surface and intracellular activation of LCK that phosphorylates the ITAM motifs of CD3G, CD3D, CD3E and CD247 enabling the recruitment of ZAP70. In turn ZAP70 phosphorylates LAT, which recruits numerous signaling molecules to form the LAT signalosome. The LAT signalosome propagates signal branching to three major signaling pathways, the calcium, the mitogen-activated protein kinase (MAPK) kinase and the nuclear factor NF-kappa-B (NF-kB) pathways, leading to the mobilization of transcription factors that are critical for gene expression and essential for T cell growth and differentiation. The T cell repertoire is generated in the thymus, by V-(D)-J rearrangement. This repertoire is then shaped by intrathymic selection events to generate a peripheral T cell pool of self-MH restricted, non-autoaggressive T cells. Post-thymic interaction of alpha-beta TR with the pMH complexes shapes TR structural and functional avidity. The protein is T cell receptor alpha variable 17 of Homo sapiens (Human).